Here is a 353-residue protein sequence, read N- to C-terminus: Quinolinate synthase (353 aa).

Residues H47 and S68 each coordinate iminosuccinate. Position 113 (C113) interacts with [4Fe-4S] cluster. Residues 139-141 (YAN) and S156 each bind iminosuccinate. C200 is a binding site for [4Fe-4S] cluster. Iminosuccinate-binding positions include 226 to 228 (HPE) and T243. Residue C297 participates in [4Fe-4S] cluster binding.

Belongs to the quinolinate synthase family. Type 1 subfamily. [4Fe-4S] cluster serves as cofactor.

It localises to the cytoplasm. The enzyme catalyses iminosuccinate + dihydroxyacetone phosphate = quinolinate + phosphate + 2 H2O + H(+). It participates in cofactor biosynthesis; NAD(+) biosynthesis; quinolinate from iminoaspartate: step 1/1. In terms of biological role, catalyzes the condensation of iminoaspartate with dihydroxyacetone phosphate to form quinolinate. In Pectobacterium atrosepticum (strain SCRI 1043 / ATCC BAA-672) (Erwinia carotovora subsp. atroseptica), this protein is Quinolinate synthase.